A 295-amino-acid polypeptide reads, in one-letter code: Acetylglutamate kinase (295 aa).

Substrate-binding positions include 66 to 67 (GG), R88, and N193.

The protein belongs to the acetylglutamate kinase family. ArgB subfamily.

The protein resides in the cytoplasm. The catalysed reaction is N-acetyl-L-glutamate + ATP = N-acetyl-L-glutamyl 5-phosphate + ADP. The protein operates within amino-acid biosynthesis; L-arginine biosynthesis; N(2)-acetyl-L-ornithine from L-glutamate: step 2/4. In terms of biological role, catalyzes the ATP-dependent phosphorylation of N-acetyl-L-glutamate. This is Acetylglutamate kinase from Gluconobacter oxydans (strain 621H) (Gluconobacter suboxydans).